A 510-amino-acid polypeptide reads, in one-letter code: Beta-galactosidase (510 aa).

The Proton donor role is filled by E210. E414 functions as the Nucleophile in the catalytic mechanism.

The protein belongs to the glycosyl hydrolase 1 family.

The enzyme catalyses Hydrolysis of terminal non-reducing beta-D-galactose residues in beta-D-galactosides.. The chain is Beta-galactosidase from Pyrococcus woesei.